The primary structure comprises 258 residues: Probable dihydroorotate dehydrogenase B (NAD(+)), electron transfer subunit (258 aa).

In terms of domain architecture, FAD-binding FR-type spans 1–90; that stretch reads MRPISATIKE…RGPYGNGWEI (90 aa). The [2Fe-2S] cluster site is built by Cys210, Cys215, Cys218, and Cys228.

Belongs to the PyrK family. In terms of assembly, heterotetramer of 2 PyrK and 2 PyrD type B subunits. It depends on [2Fe-2S] cluster as a cofactor. FAD serves as cofactor.

It functions in the pathway pyrimidine metabolism; UMP biosynthesis via de novo pathway; orotate from (S)-dihydroorotate (NAD(+) route): step 1/1. Its function is as follows. Responsible for channeling the electrons from the oxidation of dihydroorotate from the FMN redox center in the PyrD type B subunit to the ultimate electron acceptor NAD(+). This Methanocella arvoryzae (strain DSM 22066 / NBRC 105507 / MRE50) protein is Probable dihydroorotate dehydrogenase B (NAD(+)), electron transfer subunit.